The sequence spans 204 residues: Large ribosomal subunit protein uL4 (204 aa).

Residues 44–76 (RAGTHRTKGMGEISGTTKKPYRQKGTGSARQGS) are disordered.

Belongs to the universal ribosomal protein uL4 family. As to quaternary structure, part of the 50S ribosomal subunit.

One of the primary rRNA binding proteins, this protein initially binds near the 5'-end of the 23S rRNA. It is important during the early stages of 50S assembly. It makes multiple contacts with different domains of the 23S rRNA in the assembled 50S subunit and ribosome. Functionally, forms part of the polypeptide exit tunnel. This is Large ribosomal subunit protein uL4 from Gluconobacter oxydans (strain 621H) (Gluconobacter suboxydans).